The sequence spans 804 residues: Exocyst complex component 6 (804 aa).

The protein belongs to the SEC15 family. In terms of assembly, the exocyst complex is composed of EXOC1, EXOC2, EXOC3, EXOC4, EXOC5, EXOC6, EXOC7 and EXOC8. Interacts with CNTRL. Interacts with RAB11A in a GTP-dependent manner.

Its subcellular location is the cytoplasm. The protein resides in the perinuclear region. It is found in the cell projection. It localises to the growth cone. The protein localises to the midbody. Its subcellular location is the midbody ring. In terms of biological role, component of the exocyst complex involved in the docking of exocytic vesicles with fusion sites on the plasma membrane. Together with RAB11A, RAB3IP, RAB8A, PARD3, PRKCI, ANXA2, CDC42 and DNMBP promotes transcytosis of PODXL to the apical membrane initiation sites (AMIS), apical surface formation and lumenogenesis. This chain is Exocyst complex component 6 (Exoc6), found in Rattus norvegicus (Rat).